A 69-amino-acid polypeptide reads, in one-letter code: DNA-directed RNA polymerase subunit omega (69 aa).

The protein belongs to the RNA polymerase subunit omega family. In terms of assembly, the RNAP catalytic core consists of 2 alpha, 1 beta, 1 beta' and 1 omega subunit. When a sigma factor is associated with the core the holoenzyme is formed, which can initiate transcription.

It carries out the reaction RNA(n) + a ribonucleoside 5'-triphosphate = RNA(n+1) + diphosphate. In terms of biological role, promotes RNA polymerase assembly. Latches the N- and C-terminal regions of the beta' subunit thereby facilitating its interaction with the beta and alpha subunits. The polypeptide is DNA-directed RNA polymerase subunit omega (Geotalea uraniireducens (strain Rf4) (Geobacter uraniireducens)).